The following is a 259-amino-acid chain: Probable dihydroorotate dehydrogenase B (NAD(+)), electron transfer subunit (259 aa).

The region spanning 1–89 is the FAD-binding FR-type domain; sequence MLPLNVTITQ…RGPFGKGFTL (89 aa). [2Fe-2S] cluster-binding residues include Cys-211, Cys-216, Cys-219, and Cys-229.

Belongs to the PyrK family. In terms of assembly, heterotetramer of 2 PyrK and 2 PyrD type B subunits. Requires [2Fe-2S] cluster as cofactor. FAD is required as a cofactor.

Its pathway is pyrimidine metabolism; UMP biosynthesis via de novo pathway; orotate from (S)-dihydroorotate (NAD(+) route): step 1/1. Responsible for channeling the electrons from the oxidation of dihydroorotate from the FMN redox center in the PyrD type B subunit to the ultimate electron acceptor NAD(+). This chain is Probable dihydroorotate dehydrogenase B (NAD(+)), electron transfer subunit, found in Methanosarcina acetivorans (strain ATCC 35395 / DSM 2834 / JCM 12185 / C2A).